The chain runs to 442 residues: tRNA modification GTPase MnmE (442 aa).

Positions 27, 84, and 124 each coordinate (6S)-5-formyl-5,6,7,8-tetrahydrofolate. A TrmE-type G domain is found at 221–366 (GLHVVIVGAP…LLDALQAFAE (146 aa)). GTP contacts are provided by residues 231–236 (NAGKSS), 250–256 (SEEAGTT), and 275–278 (DTAG). The Mg(2+) site is built by S235 and T256. A (6S)-5-formyl-5,6,7,8-tetrahydrofolate-binding site is contributed by K442.

It belongs to the TRAFAC class TrmE-Era-EngA-EngB-Septin-like GTPase superfamily. TrmE GTPase family. As to quaternary structure, homodimer. Heterotetramer of two MnmE and two MnmG subunits. It depends on K(+) as a cofactor.

Its subcellular location is the cytoplasm. Functionally, exhibits a very high intrinsic GTPase hydrolysis rate. Involved in the addition of a carboxymethylaminomethyl (cmnm) group at the wobble position (U34) of certain tRNAs, forming tRNA-cmnm(5)s(2)U34. The chain is tRNA modification GTPase MnmE from Brucella abortus (strain 2308).